A 296-amino-acid polypeptide reads, in one-letter code: CTD kinase subunit gamma (296 aa).

Positions 25-44 are disordered; the sequence is RDSITSSSTTTPPSSQQKLN. Residues 29–39 are compositionally biased toward low complexity; that stretch reads TSSSTTTPPSS. Residue Thr35 is modified to Phosphothreonine.

This sequence belongs to the CTK3 family. In terms of assembly, CTDK-I consists of three subunits, CTK1, CTK2 and CTK3 (also called alpha, beta and gamma). Interacts with CTK1. Heterodimerization with CTK2 is required to protect this subunit from degradation. In terms of processing, ubiquitinated. Ubiquitination leads to degradation by the 26S proteasome pathway.

The protein resides in the nucleus. It is found in the nucleolus. It localises to the cytoplasm. Its function is as follows. Gamma subunit of the CTDK-I complex, which hyperphosphorylates the C-terminal heptapeptide repeat domain (CTD) of the largest RNA polymerase II subunit. CTDK-I phosphorylates 'Ser-5' if the CTD substrate is not phosphorylated at 'Ser-5', but will phosphorylate 'Ser-2' of a CTD substrate if 'Ser-5' is already phosphorylated. CTDK-I is also more reactive toward substrates that are prephosphorylated at 'Ser-2' or 'Ser-5' compared with an unphosphorylated CTD substrate, therefore efficiently creating doubly phosphorylated CTD repeats. Involved in RNA polymerase I transcription and RNA polymerase II transcriptional elongation, and as part of the CTDK-I complex, pre-mRNA 3'-end processing and SET2 mediated H3K36 methylation. Together with CTK2, required for CTK1 CTD kinase activation. Required for DNA damage induced transcription. Involved in the adaptation to alternative carbon sources, including galactose, glycerol and ethanol, but not raffinose. Required for the integrity of the rDNA locus. The sequence is that of CTD kinase subunit gamma (CTK3) from Saccharomyces cerevisiae (strain ATCC 204508 / S288c) (Baker's yeast).